The primary structure comprises 159 residues: 6,7-dimethyl-8-ribityllumazine synthase (159 aa).

5-amino-6-(D-ribitylamino)uracil contacts are provided by residues F22, 57–59 (AVE), and 81–83 (AVI). 86 to 87 (GT) contacts (2S)-2-hydroxy-3-oxobutyl phosphate. The Proton donor role is filled by H89. Residue F114 coordinates 5-amino-6-(D-ribitylamino)uracil. R128 lines the (2S)-2-hydroxy-3-oxobutyl phosphate pocket.

This sequence belongs to the DMRL synthase family. Forms an icosahedral capsid composed of 60 subunits, arranged as a dodecamer of pentamers.

It catalyses the reaction (2S)-2-hydroxy-3-oxobutyl phosphate + 5-amino-6-(D-ribitylamino)uracil = 6,7-dimethyl-8-(1-D-ribityl)lumazine + phosphate + 2 H2O + H(+). It participates in cofactor biosynthesis; riboflavin biosynthesis; riboflavin from 2-hydroxy-3-oxobutyl phosphate and 5-amino-6-(D-ribitylamino)uracil: step 1/2. Functionally, catalyzes the formation of 6,7-dimethyl-8-ribityllumazine by condensation of 5-amino-6-(D-ribitylamino)uracil with 3,4-dihydroxy-2-butanone 4-phosphate. This is the penultimate step in the biosynthesis of riboflavin. This chain is 6,7-dimethyl-8-ribityllumazine synthase, found in Shewanella baltica (strain OS155 / ATCC BAA-1091).